We begin with the raw amino-acid sequence, 486 residues long: MSTLMVQGTTSDAGKSTLVTALCRWLTRQGVKVVPFKPQNMALNSAVTADGGEIGRAQAVQAQACYLEPHTDMNPVLLKPNSDTGAQVIIHGRAVTTMNAVAYHGYKEIAMQAVLESHRRLGESYPVIVVEGAGSPAEINLRANDIANMGFAEAVDCPVLLIADINRGGVFAHLVGTLELLSLSEQARVKGFIINRFRGDIALLQPGLDWLEARTGKPVVGVLPYVMDLHLEAEDGLDQRQTDKVEHVLNVVVPVLPRISNHTDFDPLRLHPQVNLQFIGPGKAIPPADLIILPGSKSVRSDLNYLRNNGWDTAIARHLRYGGKLMGICGGLQMLGEQVHDPLGLEGAAGSSAGFGLLAMSTVLEAEKQLRNVRGRLTLEDAEVSGYEIHAGVTTGPALEQAAVQLDDGRCDGAQSADGQVLGTYLHGLFESPAACSALLRWAGLANVQSVDYHALRERDIERLADLVEKHLDGPLLRELCGLEAN.

Residues 248-435 (VLNVVVPVLP…LHGLFESPAA (188 aa)) enclose the GATase cobBQ-type domain. Cys329 (nucleophile) is an active-site residue. The active site involves His427.

This sequence belongs to the CobB/CobQ family. CobQ subfamily.

Its pathway is cofactor biosynthesis; adenosylcobalamin biosynthesis. Functionally, catalyzes amidations at positions B, D, E, and G on adenosylcobyrinic A,C-diamide. NH(2) groups are provided by glutamine, and one molecule of ATP is hydrogenolyzed for each amidation. This is Cobyric acid synthase from Pseudomonas syringae pv. syringae (strain B728a).